The chain runs to 415 residues: Serine--tRNA ligase (415 aa).

Residue 231 to 233 (TAE) participates in L-serine binding. 262–264 (RSE) contacts ATP. E285 is a binding site for L-serine. 349 to 352 (EISS) lines the ATP pocket. L-serine is bound at residue S383.

Belongs to the class-II aminoacyl-tRNA synthetase family. Type-1 seryl-tRNA synthetase subfamily. As to quaternary structure, homodimer. The tRNA molecule binds across the dimer.

Its subcellular location is the cytoplasm. It catalyses the reaction tRNA(Ser) + L-serine + ATP = L-seryl-tRNA(Ser) + AMP + diphosphate + H(+). It carries out the reaction tRNA(Sec) + L-serine + ATP = L-seryl-tRNA(Sec) + AMP + diphosphate + H(+). It participates in aminoacyl-tRNA biosynthesis; selenocysteinyl-tRNA(Sec) biosynthesis; L-seryl-tRNA(Sec) from L-serine and tRNA(Sec): step 1/1. Its function is as follows. Catalyzes the attachment of serine to tRNA(Ser). Is also able to aminoacylate tRNA(Sec) with serine, to form the misacylated tRNA L-seryl-tRNA(Sec), which will be further converted into selenocysteinyl-tRNA(Sec). The protein is Serine--tRNA ligase of Helicobacter pylori (strain ATCC 700392 / 26695) (Campylobacter pylori).